The chain runs to 1009 residues: Dihydropyrimidine dehydrogenase [NADP(+)] (1009 aa).

The 4Fe-4S ferredoxin-type 1 domain maps to 69–99 (RGALFESARCLKCADAPCQKGCPTQLDIKSF). 4 residues coordinate [4Fe-4S] cluster: Cys78, Cys81, Cys86, and Cys90. Residue Val128 coordinates FAD. The [4Fe-4S] cluster site is built by Cys129, Cys135, Cys139, and Gln155. Residues 193-197 (GCGPT), 217-225 (EKEQYLGGL), Arg234, and Leu260 contribute to the FAD site. Residues 339 to 342 (AGDT), 363 to 364 (RR), Arg370, 436 to 438 (AFG), and 479 to 484 (DLVGNG) each bind NADP(+). 478–486 (GDLVGNGTT) serves as a coordination point for FAD. Residues Ser548 and 572 to 573 (KT) each bind FMN. Substrate is bound by residues Asn607 and 666 to 668 (NLS). Cys669 (proton acceptor) is an active-site residue. Residue Lys707 coordinates FMN. Residue 734-735 (NT) coordinates substrate. FMN-binding positions include Gly765, 791-793 (TGG), and 814-815 (CS). 4Fe-4S ferredoxin-type domains follow at residues 932-964 (VVAL…FDGK) and 965-995 (THIP…MVPR). Residues Cys941, Cys944, Cys947, Cys951, Cys974, Cys977, Cys980, and Cys984 each contribute to the [4Fe-4S] cluster site.

The protein belongs to the dihydropyrimidine dehydrogenase family. In terms of assembly, homodimer. [4Fe-4S] cluster is required as a cofactor. FAD serves as cofactor. Requires FMN as cofactor.

It is found in the cytoplasm. It catalyses the reaction 5,6-dihydrouracil + NADP(+) = uracil + NADPH + H(+). It participates in amino-acid biosynthesis; beta-alanine biosynthesis. Its function is as follows. Involved in pyrimidine base degradation. Catalyzes the reduction of uracil and thymine. This is Dihydropyrimidine dehydrogenase [NADP(+)] (pyd1) from Dictyostelium discoideum (Social amoeba).